The chain runs to 418 residues: Thyroxine-binding globulin (418 aa).

The N-terminal stretch at 1 to 20 (MSVFFYLFVLVFGLQATIHC) is a signal peptide. N-linked (GlcNAc...) asparagine glycosylation is found at Asn-24, Asn-39, Asn-102, Asn-168, Asn-227, and Asn-256. The thyroxine site is built by Asn-296 and Lys-401.

It belongs to the serpin family.

The protein localises to the secreted. Major thyroid hormone transport protein in serum. This Mus musculus (Mouse) protein is Thyroxine-binding globulin (Serpina7).